Reading from the N-terminus, the 311-residue chain is Aspartate carbamoyltransferase catalytic subunit (311 aa).

Carbamoyl phosphate is bound by residues arginine 55 and threonine 56. Residue lysine 85 participates in L-aspartate binding. Carbamoyl phosphate is bound by residues arginine 106, histidine 135, and glutamine 138. Residues arginine 168 and arginine 230 each contribute to the L-aspartate site. Leucine 268 and proline 269 together coordinate carbamoyl phosphate.

Belongs to the aspartate/ornithine carbamoyltransferase superfamily. ATCase family. In terms of assembly, heterododecamer (2C3:3R2) of six catalytic PyrB chains organized as two trimers (C3), and six regulatory PyrI chains organized as three dimers (R2).

The catalysed reaction is carbamoyl phosphate + L-aspartate = N-carbamoyl-L-aspartate + phosphate + H(+). Its pathway is pyrimidine metabolism; UMP biosynthesis via de novo pathway; (S)-dihydroorotate from bicarbonate: step 2/3. In terms of biological role, catalyzes the condensation of carbamoyl phosphate and aspartate to form carbamoyl aspartate and inorganic phosphate, the committed step in the de novo pyrimidine nucleotide biosynthesis pathway. In Yersinia pseudotuberculosis serotype O:1b (strain IP 31758), this protein is Aspartate carbamoyltransferase catalytic subunit.